The chain runs to 183 residues: Interleukin-36 beta (183 aa).

Residues 1–30 (MMAFPPQSCVHVLPPKSIQMWEPNHNTMHG) constitute a propeptide that is removed on maturation.

The protein belongs to the IL-1 family. Interacts with cargo receptor TMED10; the interaction mediates the translocation from the cytoplasm into the ERGIC (endoplasmic reticulum-Golgi intermediate compartment) and thereby secretion. Post-translationally, N-terminal truncation leads to a dramatic enhancement of its activity (&gt;1000-fold).

The protein resides in the cytoplasm. The protein localises to the secreted. Functionally, cytokine that binds to and signals through the IL1RL2/IL-36R receptor which in turn activates NF-kappa-B and MAPK signaling pathways in target cells linked to a pro-inflammatory response. Part of the IL-36 signaling system that is thought to be present in epithelial barriers and to take part in local inflammatory response; similar to the IL-1 system with which it shares the coreceptor IL1RAP. Stimulates production of interleukin-6 and interleukin-8 in synovial fibrobasts, articular chondrocytes and mature adipocytes. Induces expression of a number of antimicrobial peptides including beta-defensin 4 and beta-defensin 103 as well as a number of matrix metalloproteases. Seems to be involved in skin inflammatory response by acting on keratinocytes, dendritic cells and indirectly on T-cells to drive tissue infiltration, cell maturation and cell proliferation. Induces the production of pro-inflammatory cytokines in bone marrow-derived dendritic cells (BMDCs), including IL-12, Il-1 beta, IL-6, TNF-alpha and IL-23, and activates p38 MAPK phosphorylation in BMDCs. Involved in dendritic cell maturation by stimulating the surface expression of CD80, CD86 and MHC class II. Induces the production of IFN-gamma, IL-4 and IL-17 by T-helper 1 (Th1) cells, cultured CD4(+) T-cells and splenocytes. This Mus musculus (Mouse) protein is Interleukin-36 beta.